We begin with the raw amino-acid sequence, 257 residues long: UPF0246 protein Ent638_0568 (257 aa).

Belongs to the UPF0246 family.

The protein is UPF0246 protein Ent638_0568 of Enterobacter sp. (strain 638).